A 167-amino-acid chain; its full sequence is Lipoprotein signal peptidase (167 aa).

The next 4 membrane-spanning stretches (helical) occupy residues 8 to 28 (TFLTLLLLASIDWVSKLVVLL), 46 to 66 (WGHFSFLIIPSFNEGAAFGLF), 68 to 88 (QYKIPLLIFRVCVILGLALFL), and 101 to 121 (VALTLILAGALGNVGDILLYG). Residues D125 and D143 contribute to the active site. Residues 139-159 (FNLADAFISIGTLLLIGHLYF) traverse the membrane as a helical segment.

Belongs to the peptidase A8 family.

It localises to the cell inner membrane. It carries out the reaction Release of signal peptides from bacterial membrane prolipoproteins. Hydrolyzes -Xaa-Yaa-Zaa-|-(S,diacylglyceryl)Cys-, in which Xaa is hydrophobic (preferably Leu), and Yaa (Ala or Ser) and Zaa (Gly or Ala) have small, neutral side chains.. The protein operates within protein modification; lipoprotein biosynthesis (signal peptide cleavage). This protein specifically catalyzes the removal of signal peptides from prolipoproteins. This Chlamydia trachomatis serovar A (strain ATCC VR-571B / DSM 19440 / HAR-13) protein is Lipoprotein signal peptidase.